Reading from the N-terminus, the 540-residue chain is GMP synthase [glutamine-hydrolyzing] (540 aa).

In terms of domain architecture, Glutamine amidotransferase type-1 spans 29 to 222 (KILIVDFGSQ…VRKVAGLTGD (194 aa)). Cysteine 106 serves as the catalytic Nucleophile. Residues histidine 196 and glutamate 198 contribute to the active site. The region spanning 223–415 (WTMRAFREEA…LGLPDVFVGR (193 aa)) is the GMPS ATP-PPase domain. 250–256 (SGGVDSA) lines the ATP pocket.

As to quaternary structure, homodimer.

It catalyses the reaction XMP + L-glutamine + ATP + H2O = GMP + L-glutamate + AMP + diphosphate + 2 H(+). Its pathway is purine metabolism; GMP biosynthesis; GMP from XMP (L-Gln route): step 1/1. Catalyzes the synthesis of GMP from XMP. In Rhodopseudomonas palustris (strain ATCC BAA-98 / CGA009), this protein is GMP synthase [glutamine-hydrolyzing].